A 353-amino-acid chain; its full sequence is UDP-N-acetylglucosamine--N-acetylmuramyl-(pentapeptide) pyrophosphoryl-undecaprenol N-acetylglucosamine transferase (353 aa).

Residues 15-17 (TGG), asparagine 125, arginine 165, serine 186, and glutamine 286 contribute to the UDP-N-acetyl-alpha-D-glucosamine site.

Belongs to the glycosyltransferase 28 family. MurG subfamily.

The protein resides in the cell inner membrane. It catalyses the reaction di-trans,octa-cis-undecaprenyl diphospho-N-acetyl-alpha-D-muramoyl-L-alanyl-D-glutamyl-meso-2,6-diaminopimeloyl-D-alanyl-D-alanine + UDP-N-acetyl-alpha-D-glucosamine = di-trans,octa-cis-undecaprenyl diphospho-[N-acetyl-alpha-D-glucosaminyl-(1-&gt;4)]-N-acetyl-alpha-D-muramoyl-L-alanyl-D-glutamyl-meso-2,6-diaminopimeloyl-D-alanyl-D-alanine + UDP + H(+). It participates in cell wall biogenesis; peptidoglycan biosynthesis. Cell wall formation. Catalyzes the transfer of a GlcNAc subunit on undecaprenyl-pyrophosphoryl-MurNAc-pentapeptide (lipid intermediate I) to form undecaprenyl-pyrophosphoryl-MurNAc-(pentapeptide)GlcNAc (lipid intermediate II). The sequence is that of UDP-N-acetylglucosamine--N-acetylmuramyl-(pentapeptide) pyrophosphoryl-undecaprenol N-acetylglucosamine transferase from Chlamydia muridarum (strain MoPn / Nigg).